The following is a 209-amino-acid chain: Large ribosomal subunit protein uL3 (209 aa).

A disordered region spans residues Asn-127–Gly-164.

Belongs to the universal ribosomal protein uL3 family. Part of the 50S ribosomal subunit. Forms a cluster with proteins L14 and L19.

In terms of biological role, one of the primary rRNA binding proteins, it binds directly near the 3'-end of the 23S rRNA, where it nucleates assembly of the 50S subunit. The chain is Large ribosomal subunit protein uL3 from Chlorobium phaeobacteroides (strain BS1).